Consider the following 442-residue polypeptide: tRNA pseudouridine(38/39) synthase (442 aa).

Asp151 (nucleophile) is an active-site residue. Tyr222 lines the substrate pocket.

This sequence belongs to the tRNA pseudouridine synthase TruA family.

The protein resides in the nucleus. The enzyme catalyses uridine(38/39) in tRNA = pseudouridine(38/39) in tRNA. Formation of pseudouridines at positions 38 and 39 in the anticodon stem and loop of transfer RNAs. In Saccharomyces cerevisiae (strain ATCC 204508 / S288c) (Baker's yeast), this protein is tRNA pseudouridine(38/39) synthase (DEG1).